A 197-amino-acid polypeptide reads, in one-letter code: 3-isopropylmalate dehydratase small subunit (197 aa).

The protein belongs to the LeuD family. LeuD type 1 subfamily. Heterodimer of LeuC and LeuD.

It carries out the reaction (2R,3S)-3-isopropylmalate = (2S)-2-isopropylmalate. The protein operates within amino-acid biosynthesis; L-leucine biosynthesis; L-leucine from 3-methyl-2-oxobutanoate: step 2/4. Its function is as follows. Catalyzes the isomerization between 2-isopropylmalate and 3-isopropylmalate, via the formation of 2-isopropylmaleate. The polypeptide is 3-isopropylmalate dehydratase small subunit (Corynebacterium glutamicum (strain ATCC 13032 / DSM 20300 / JCM 1318 / BCRC 11384 / CCUG 27702 / LMG 3730 / NBRC 12168 / NCIMB 10025 / NRRL B-2784 / 534)).